Here is a 335-residue protein sequence, read N- to C-terminus: MSRVTLSRYLIEQTRSHNTPADLRFLIEVVARACKAISHQVSKGALGGVLGSLDSENVQGEVQKKLDVISNEILLEANEWGGHLAGMASEEMDNAYQIPGKYPKGAYLLVFDPLDGSSNIDVNVSVGTIFSVLRCPDRNGDTGDLGEDAFLQPGTQQVAAGYAIYGPQTMLMLTLGDGVKGFTLDRELGSFVLTHDNIKVPESTKEFAINMSNQRHWEAPVQRYVSELLAGETGPLGRNYNMRWIASMVADVHRILTRGGVFMYPRDAREPDKPGKLRLMYEANPMSMIIEQAGGAATDGSQRILDIQPTSLHQRVPVFLGSKEEVLRVTAYHRG.

Glutamate 90, aspartate 112, leucine 114, and aspartate 115 together coordinate Mg(2+). Residues 115-118 (DGSS), asparagine 210, and lysine 276 each bind substrate. Glutamate 282 serves as a coordination point for Mg(2+).

Belongs to the FBPase class 1 family. In terms of assembly, homotetramer. Mg(2+) is required as a cofactor.

It is found in the cytoplasm. It catalyses the reaction beta-D-fructose 1,6-bisphosphate + H2O = beta-D-fructose 6-phosphate + phosphate. The protein operates within carbohydrate biosynthesis; gluconeogenesis. The chain is Fructose-1,6-bisphosphatase class 1 from Ectopseudomonas mendocina (strain ymp) (Pseudomonas mendocina).